The chain runs to 236 residues: Large ribosomal subunit protein uL3 (236 aa).

Belongs to the universal ribosomal protein uL3 family. Part of the 50S ribosomal subunit. Forms a cluster with proteins L14 and L19.

Its function is as follows. One of the primary rRNA binding proteins, it binds directly near the 3'-end of the 23S rRNA, where it nucleates assembly of the 50S subunit. In Anaeromyxobacter dehalogenans (strain 2CP-1 / ATCC BAA-258), this protein is Large ribosomal subunit protein uL3.